The following is a 322-amino-acid chain: tRNA dimethylallyltransferase (322 aa).

Residue 19–26 (GPTASGKT) coordinates ATP. 21–26 (TASGKT) is a binding site for substrate. Interaction with substrate tRNA regions lie at residues 44–47 (DSAL), 168–172 (QRIQR), and 255–260 (RCVGYR).

Belongs to the IPP transferase family. In terms of assembly, monomer. Mg(2+) serves as cofactor.

It carries out the reaction adenosine(37) in tRNA + dimethylallyl diphosphate = N(6)-dimethylallyladenosine(37) in tRNA + diphosphate. Functionally, catalyzes the transfer of a dimethylallyl group onto the adenine at position 37 in tRNAs that read codons beginning with uridine, leading to the formation of N6-(dimethylallyl)adenosine (i(6)A). This Cupriavidus necator (strain ATCC 17699 / DSM 428 / KCTC 22496 / NCIMB 10442 / H16 / Stanier 337) (Ralstonia eutropha) protein is tRNA dimethylallyltransferase.